Consider the following 329-residue polypeptide: Ketol-acid reductoisomerase (NADP(+)) (329 aa).

Positions 2–181 (MKKYYESDAD…GATRAVVLET (180 aa)) constitute a KARI N-terminal Rossmann domain. Residues 25-28 (YGSQ), arginine 48, serine 52, and 82-85 (DELQ) contribute to the NADP(+) site. Histidine 107 is an active-site residue. Residue glycine 133 coordinates NADP(+). A KARI C-terminal knotted domain is found at 182 to 327 (TFREETETDL…KEVRAMMPQF (146 aa)). Aspartate 190, glutamate 194, glutamate 226, and glutamate 230 together coordinate Mg(2+). Serine 251 is a substrate binding site.

Belongs to the ketol-acid reductoisomerase family. It depends on Mg(2+) as a cofactor.

It catalyses the reaction (2R)-2,3-dihydroxy-3-methylbutanoate + NADP(+) = (2S)-2-acetolactate + NADPH + H(+). The catalysed reaction is (2R,3R)-2,3-dihydroxy-3-methylpentanoate + NADP(+) = (S)-2-ethyl-2-hydroxy-3-oxobutanoate + NADPH + H(+). The protein operates within amino-acid biosynthesis; L-isoleucine biosynthesis; L-isoleucine from 2-oxobutanoate: step 2/4. It participates in amino-acid biosynthesis; L-valine biosynthesis; L-valine from pyruvate: step 2/4. Its function is as follows. Involved in the biosynthesis of branched-chain amino acids (BCAA). Catalyzes an alkyl-migration followed by a ketol-acid reduction of (S)-2-acetolactate (S2AL) to yield (R)-2,3-dihydroxy-isovalerate. In the isomerase reaction, S2AL is rearranged via a Mg-dependent methyl migration to produce 3-hydroxy-3-methyl-2-ketobutyrate (HMKB). In the reductase reaction, this 2-ketoacid undergoes a metal-dependent reduction by NADPH to yield (R)-2,3-dihydroxy-isovalerate. In Methanoregula boonei (strain DSM 21154 / JCM 14090 / 6A8), this protein is Ketol-acid reductoisomerase (NADP(+)).